We begin with the raw amino-acid sequence, 1057 residues long: Exportin-1 (1057 aa).

The Importin N-terminal domain maps to 36-102; that stretch reads AQMVLGKFQE…KNYIVSLIIR (67 aa). 11 HEAT repeats span residues 239–275, 281–321, 462–501, 506–544, 551–588, 596–633, 739–776, 781–818, 855–892, 902–925, and 926–965; these read AEPS…LNLG, AVFI…FIHT, NTQH…AQNK, RFLV…QYPR, KFLK…QCKR, EESQ…YMIA, KETL…DYRT, TRDP…TTLS, QQFK…NVSK, KTYL…KSGF, and ALEC…YVKE.

The protein belongs to the exportin family. As to quaternary structure, component of a nuclear export receptor complex.

It localises to the nucleus. Its subcellular location is the cytoplasm. The protein resides in the perinuclear region. In terms of biological role, mediates the nuclear export of cellular proteins (cargos) bearing a leucine-rich nuclear export signal (NES). This Dictyostelium discoideum (Social amoeba) protein is Exportin-1 (xpo1).